Consider the following 125-residue polypeptide: ATP synthase epsilon chain (125 aa).

Belongs to the ATPase epsilon chain family. As to quaternary structure, F-type ATPases have 2 components, CF(1) - the catalytic core - and CF(0) - the membrane proton channel. CF(1) has five subunits: alpha(3), beta(3), gamma(1), delta(1), epsilon(1). CF(0) has three main subunits: a, b and c.

It localises to the cell inner membrane. Its function is as follows. Produces ATP from ADP in the presence of a proton gradient across the membrane. The polypeptide is ATP synthase epsilon chain (Aliarcobacter butzleri (strain RM4018) (Arcobacter butzleri)).